The chain runs to 91 residues: Cell division topological specificity factor (91 aa).

The protein belongs to the MinE family.

Functionally, prevents the cell division inhibition by proteins MinC and MinD at internal division sites while permitting inhibition at polar sites. This ensures cell division at the proper site by restricting the formation of a division septum at the midpoint of the long axis of the cell. The polypeptide is Cell division topological specificity factor (Bradyrhizobium sp. (strain BTAi1 / ATCC BAA-1182)).